The following is a 333-amino-acid chain: Taste receptor type 2 member 38 (333 aa).

The Extracellular portion of the chain corresponds to 1-17; the sequence is MLTLTRICAVSYEVRST. The chain crosses the membrane as a helical span at residues 18–38; the sequence is FLFISVLEFAVGFLTNAFIFL. Topologically, residues 39–55 are cytoplasmic; sequence VNFWDVVKRQPLSNSDC. A helical transmembrane segment spans residues 56–76; that stretch reads VLLCLSISRLFLHGLLFLSAI. The Extracellular portion of the chain corresponds to 77–94; that stretch reads QLTHFQKLSEPLNHSYQA. A helical membrane pass occupies residues 95–115; sequence IIMLWIIANQANLWLAACLSL. The Cytoplasmic portion of the chain corresponds to 116-142; it reads LYCSKLIRFSHTFLICLASWVSRKISQ. A helical membrane pass occupies residues 143–163; that stretch reads MLLGIILCSCICTVLCVWCFF. At 164–190 the chain is on the extracellular side; sequence SRPHFTVTTFLFMNNNTRLNWQIKDLN. N-linked (GlcNAc...) asparagine glycosylation occurs at asparagine 178. The helical transmembrane segment at 191–211 threads the bilayer; that stretch reads LFYSFLFCYLWSVPPFLLFLV. Topologically, residues 212-251 are cytoplasmic; the sequence is SSGMLTVSLGRHMRTMKVYTRDSRDPSLEAHIKALKSLVS. Residues 252–272 form a helical membrane-spanning segment; the sequence is FFCFFVISSCAAFISVPLLIL. At 273–276 the chain is on the extracellular side; sequence WRNK. The helical transmembrane segment at 277–297 threads the bilayer; it reads IGVMVCVGIMAACPSGHAAVL. At 298–333 the chain is on the cytoplasmic side; the sequence is ISGNATLRRAVTTILLWAQSSMKVRADHKADSRTLC.

This sequence belongs to the G-protein coupled receptor T2R family.

The protein resides in the membrane. Its function is as follows. Receptor that may play a role in the perception of bitterness and is gustducin-linked. May play a role in sensing the chemical composition of the gastrointestinal content. The activity of this receptor may stimulate alpha gustducin, mediate PLC-beta-2 activation and lead to the gating of TRPM5. This is Taste receptor type 2 member 38 (TAS2R38) from Pongo pygmaeus (Bornean orangutan).